The sequence spans 536 residues: MSKFVFVTGGVVSSIGKGIVAASLGRLLKSRGYSVSILKLDPYLNVDPGTMSPFQHGEVFVTEDGAETDLDLGHYERFTDTAMTRLNSVTTGSIYQAVINKERRGNYNGGTVQVIPHITGEIRERIHRVAANSNADIIITEIGGTVGDIESLPFLEAIREFKNDVNRNDVAYIHVTLLPYIKTSGEIKTKPTQHSVKELRSIGIQPDLLVCRSDKSINEALKKKLSGFCGVNINSVIEALDADSIYSVPLSLKKEGLCKETLKYLDLEDKKCDLKNWEQLIHNLRNPGDPIKVALVGKYIELGDAYLSVVEALRHACIEQRALLDLHWVSAEMIENNSAETYLNEVDAIVVPGGFGNRGVNGKISAIKFARENKIPFLGLCLGMQCAVIEWARNVANLPDASSSELDPNTPNPVIHLLPEQEDVVDLGGTMRLGVYPCRLTKNTTGKNLYDEDVIYERHRHRYEFNNYYKQSFLDSGYKISGTSPDGRLVELIELENHPYFLACQYHPEFLSRPGKPHPLFKGLIKASQDKLTQSN.

Residues 1-267 (MSKFVFVTGG…CKETLKYLDL (267 aa)) form an amidoligase domain region. Ser13 provides a ligand contact to CTP. Ser13 contributes to the UTP binding site. Residues 14–19 (SIGKGI) and Asp71 contribute to the ATP site. Mg(2+) contacts are provided by Asp71 and Glu141. CTP contacts are provided by residues 148–150 (DIE), 188–193 (KTKPTQ), and Lys224. Residues 188-193 (KTKPTQ) and Lys224 contribute to the UTP site. Residues 292 to 534 (KVALVGKYIE…IKASQDKLTQ (243 aa)) enclose the Glutamine amidotransferase type-1 domain. Gly354 is an L-glutamine binding site. The active-site Nucleophile; for glutamine hydrolysis is the Cys381. L-glutamine contacts are provided by residues 382-385 (LGMQ), Glu405, and Arg462. Catalysis depends on residues His507 and Glu509.

It belongs to the CTP synthase family. As to quaternary structure, homotetramer.

It carries out the reaction UTP + L-glutamine + ATP + H2O = CTP + L-glutamate + ADP + phosphate + 2 H(+). It catalyses the reaction L-glutamine + H2O = L-glutamate + NH4(+). The enzyme catalyses UTP + NH4(+) + ATP = CTP + ADP + phosphate + 2 H(+). It participates in pyrimidine metabolism; CTP biosynthesis via de novo pathway; CTP from UDP: step 2/2. Its activity is regulated as follows. Allosterically activated by GTP, when glutamine is the substrate; GTP has no effect on the reaction when ammonia is the substrate. The allosteric effector GTP functions by stabilizing the protein conformation that binds the tetrahedral intermediate(s) formed during glutamine hydrolysis. Inhibited by the product CTP, via allosteric rather than competitive inhibition. In terms of biological role, catalyzes the ATP-dependent amination of UTP to CTP with either L-glutamine or ammonia as the source of nitrogen. Regulates intracellular CTP levels through interactions with the four ribonucleotide triphosphates. This chain is CTP synthase, found in Prochlorococcus marinus (strain AS9601).